An 859-amino-acid polypeptide reads, in one-letter code: MACQLDLLIGVIFMASPVLVISPCSSDGRIAFFRGCNLTQIPWILNTTTERLLLSFNYISMVVATSFPLLERLQLLELGTQYANLTIGPGAFRNLPNLRILDLGQSQIEVLNRDAFQGLPHLLELRLFSCGLSSAVLSDGYFRNLYSLARLDLSGNQIHSLRLHSSFRELNSLSDVNFAFNQIFTICEDELEPLQGKTLSFFGLKLTKLFSRVSVGWETCRNPFRGVRLETLDLSENGWTVDITRNFSNIIQGSQISSLILKHHIMGPGFGFQNIRDPDQSTFASLARSSVLQLDLSHGFIFSLNPRLFGTLKDLKMLNLAFNKINKIGENAFYGLDSLQVLNLSYNLLGELYNSNFYGLPRVAYVDLQRNHIGIIQDQTFRLLKTLQTLDLRDNALKAIGFIPSIQMVLLGGNKLVHLPHIHFTANFLELSENRLENLSDLYFLLRVPQLQFLILNQNRLSSCKAAHTPSENPSLEQLFLTENMLQLAWETGLCWDVFQGLSRLQILYLSNNYLNFLPPGIFNDLVALRMLSLSANKLTVLSPGSLPANLEILDISRNQLLCPDPALFSSLRVLDITHNEFVCNCELSTFISWLNQTNVTLFGSPADVYCMYPNSLLGGSLYNISTEDCDEEEAMRSLKFSLFILCTVTLTLFLVITLVVIKFRGICFLCYKTIQKLVFKDKVWSLEPGAYRYDAYFCFSSKDFEWAQNALLKHLDAHYSSRNRLRLCFEERDFIPGENHISNIQAAVWGSRKTVCLVSRHFLKDGWCLEAFRYAQSRSLSDLKSILIVVVVGSLSQYQLMRHETIRGFLQKQQYLRWPEDLQDVGWFLDKLSGCILKEEKGKKRSSSIQLRTIATIS.

The signal sequence occupies residues 1–26 (MACQLDLLIGVIFMASPVLVISPCSS). Residues 27 to 641 (DGRIAFFRGC…EEEAMRSLKF (615 aa)) lie on the Extracellular side of the membrane. 3 N-linked (GlcNAc...) asparagine glycosylation sites follow: Asn37, Asn46, and Asn84. LRR repeat units follow at residues 45–69 (LNTT…SFPL), 72–94 (RLQL…AFRN), 96–118 (PNLR…AFQG), 121–144 (HLLE…YFRN), 147–167 (SLAR…HSSF), 172–193 (SLSD…ELEP), 198–212 (TLSF…LFSR), 215–230 (VGWE…VRLE), and 235–236 (SE). N-linked (GlcNAc...) asparagine glycosylation is present at Asn246. LRR repeat units lie at residues 261–285 (LKHH…TFAS), 290–302 (SVLQ…GFIF), 314–335 (DLKM…AFYG), 338–356 (SLQV…YNSN), 386–402 (TLQT…AIGF), and 413–432 (GNKL…LELS). An N-linked (GlcNAc...) asparagine glycan is attached at Asn343. An N-linked (GlcNAc...) asparagine glycan is attached at Asn438. LRR repeat units follow at residues 450 to 471 (QLQF…HTPS), 475 to 496 (SLEQ…GLCW), 504 to 525 (RLQI…IFND), 528 to 547 (ALRM…PGSL), and 550 to 568 (NLEI…DPAL). The region spanning 580 to 632 (NEFVCNCELSTFISWLNQTNVTLFGSPADVYCMYPNSLLGGSLYNISTEDCDE) is the LRRCT domain. Cystine bridges form between Cys584/Cys611 and Cys586/Cys630. Asn596, Asn599, and Asn624 each carry an N-linked (GlcNAc...) asparagine glycan. The helical transmembrane segment at 642–662 (SLFILCTVTLTLFLVITLVVI) threads the bilayer. Residues 663–859 (KFRGICFLCY…IQLRTIATIS (197 aa)) lie on the Cytoplasmic side of the membrane. The 146-residue stretch at 692 to 837 (YRYDAYFCFS…WFLDKLSGCI (146 aa)) folds into the TIR domain. Tyr799 is modified (phosphotyrosine).

Belongs to the Toll-like receptor family. Homodimer. Interacts with MYD88 (via TIR domain). Interacts with TICAM1 (via TIR domain). Interacts with UNC93B1; this interaction is essential for proper TLR5 localization to the plasma membrane. In terms of processing, phosphorylated at Tyr-799 upon flagellin binding; required for signaling. As to expression, highly expressed in liver. Detected in lung and at very low levels in most other tissues.

It localises to the membrane. Functionally, pattern recognition receptor (PRR) located on the cell surface that participates in the activation of innate immunity and inflammatory response. Recognizes small molecular motifs named pathogen-associated molecular pattern (PAMPs) expressed by pathogens and microbe-associated molecular patterns (MAMPs) usually expressed by resident microbiota. Upon ligand binding such as bacterial flagellins, recruits intracellular adapter proteins MYD88 and TRIF leading to NF-kappa-B activation, cytokine secretion and induction of the inflammatory response. Plays thereby an important role in the relationship between the intestinal epithelium and enteric microbes and contributes to the gut microbiota composition throughout life. The protein is Toll-like receptor 5 (Tlr5) of Mus musculus (Mouse).